Reading from the N-terminus, the 476-residue chain is Bifunctional protein HldE (476 aa).

The segment at 1 to 318 (MKVTLPEFER…ENAVRGRADT (318 aa)) is ribokinase. 195–198 (NLSE) serves as a coordination point for ATP. Aspartate 264 is a catalytic residue. Residues 344–476 (MTNGVFDILH…IIKKIQKDSQ (133 aa)) form a cytidylyltransferase region.

It in the N-terminal section; belongs to the carbohydrate kinase PfkB family. In the C-terminal section; belongs to the cytidylyltransferase family. As to quaternary structure, homodimer.

The enzyme catalyses D-glycero-beta-D-manno-heptose 7-phosphate + ATP = D-glycero-beta-D-manno-heptose 1,7-bisphosphate + ADP + H(+). It catalyses the reaction D-glycero-beta-D-manno-heptose 1-phosphate + ATP + H(+) = ADP-D-glycero-beta-D-manno-heptose + diphosphate. The protein operates within nucleotide-sugar biosynthesis; ADP-L-glycero-beta-D-manno-heptose biosynthesis; ADP-L-glycero-beta-D-manno-heptose from D-glycero-beta-D-manno-heptose 7-phosphate: step 1/4. It participates in nucleotide-sugar biosynthesis; ADP-L-glycero-beta-D-manno-heptose biosynthesis; ADP-L-glycero-beta-D-manno-heptose from D-glycero-beta-D-manno-heptose 7-phosphate: step 3/4. Its function is as follows. Catalyzes the phosphorylation of D-glycero-D-manno-heptose 7-phosphate at the C-1 position to selectively form D-glycero-beta-D-manno-heptose-1,7-bisphosphate. Functionally, catalyzes the ADP transfer from ATP to D-glycero-beta-D-manno-heptose 1-phosphate, yielding ADP-D-glycero-beta-D-manno-heptose. This Enterobacter sp. (strain 638) protein is Bifunctional protein HldE.